The following is a 174-amino-acid chain: Achaete-scute homolog 3 (174 aa).

The segment at 92 to 105 (AFIRKRNERERQRV) is basic motif. Residues 92–144 (AFIRKRNERERQRVKCVNEGYARLRRHLPEDYLEKRLSKVETLRAAIKYISYL) enclose the bHLH domain. Residues 106 to 144 (KCVNEGYARLRRHLPEDYLEKRLSKVETLRAAIKYISYL) are helix-loop-helix motif. Residues 153-174 (SETKKNPRTASCGSLDPALRVI) are disordered.

As to quaternary structure, efficient DNA binding requires dimerization with another bHLH protein. As to expression, expressed in the salivary duct cells. Also expressed at lower levels in testis and epididymis. Expressed in the olfactory epithelium (OE), in a subset of apical microvillar cells.

Its subcellular location is the nucleus. In terms of biological role, transcriptional repressor. Inhibits myogenesis. Plays a role in progenitor cells which differentiate into ductal and acinar, but not myoepithelial, cell lineages in the salivary glands. Involved in the functions of the microvillar cells and Bowman's glands and probably, in a non-cell-autonomous manner, in the development or regeneration of a complete olfactory epithelium (OE). This is Achaete-scute homolog 3 (Ascl3) from Mus musculus (Mouse).